We begin with the raw amino-acid sequence, 218 residues long: Hypoxanthine-guanine phosphoribosyltransferase (218 aa).

A2 is modified (N-acetylalanine). GMP is bound at residue K69. K103 carries the N6-acetyllysine modification. K115 participates in a covalent cross-link: Glycyl lysine isopeptide (Lys-Gly) (interchain with G-Cter in SUMO1); alternate. K115 participates in a covalent cross-link: Glycyl lysine isopeptide (Lys-Gly) (interchain with G-Cter in SUMO2); alternate. Residues 134 to 142 (EDIIDTGKT), K166, 186 to 188 (KFV), and D194 each bind GMP. The Proton acceptor role is filled by D138. T142 carries the post-translational modification Phosphothreonine. Residue D194 participates in Mg(2+) binding.

Belongs to the purine/pyrimidine phosphoribosyltransferase family. In terms of assembly, homotetramer. It depends on Mg(2+) as a cofactor.

Its subcellular location is the cytoplasm. It catalyses the reaction IMP + diphosphate = hypoxanthine + 5-phospho-alpha-D-ribose 1-diphosphate. The catalysed reaction is GMP + diphosphate = guanine + 5-phospho-alpha-D-ribose 1-diphosphate. It participates in purine metabolism; IMP biosynthesis via salvage pathway; IMP from hypoxanthine: step 1/1. Functionally, converts guanine to guanosine monophosphate, and hypoxanthine to inosine monophosphate. Transfers the 5-phosphoribosyl group from 5-phosphoribosylpyrophosphate onto the purine. Plays a central role in the generation of purine nucleotides through the purine salvage pathway. This is Hypoxanthine-guanine phosphoribosyltransferase (HPRT1) from Sus scrofa (Pig).